An 83-amino-acid polypeptide reads, in one-letter code: Short neurotoxin NCA-02/NCA-05/UER-05 (83 aa).

A signal peptide spans 1-21 (MKTLLLTLVVVTMVCLDLGYT). 4 disulfide bridges follow: Cys-24-Cys-45, Cys-38-Cys-62, Cys-64-Cys-75, and Cys-76-Cys-81.

This sequence belongs to the three-finger toxin family. Short-chain subfamily. Type I alpha-neurotoxin sub-subfamily. In terms of tissue distribution, expressed by the venom gland.

It localises to the secreted. Functionally, binds to muscle nicotinic acetylcholine receptor (nAChR) and inhibit acetylcholine from binding to the receptor, thereby impairing neuromuscular transmission. The polypeptide is Short neurotoxin NCA-02/NCA-05/UER-05 (Laticauda colubrina (Yellow-lipped sea krait)).